The following is a 413-amino-acid chain: MNELLIKAEQLQQAAKTLALLSTEEKNEALTRIAEALIKQKEWILQENEKDVALGKEQGLSPALIDRLQLTNERIEQIVDGVRQVADLPDPIGEIVEEWTRPNGLRIQTIRVPLGVIGMVYEARPNVTVDAASLCLKTGNAVLLRGSSSALHSNKALVHVMKEALRDSAIPADAIQLLEDTSREAAQQMFRLNGYLDVLIPRGGAGLIRSVIENATVPVLETGVGNCHIFIDESAQKQMAIDIVLNAKLQRPSVCNAVETVLIHQNWPYISELVETLHARGVELRGDSQLASSYSFIQQAAETDWSTEYLAPILAVKLVQNVKEAVDHINRYGTKHSEAIISEQNDNVRFFFQAIDAAVLYHNASTRFTDGEQFGYGAEIGISTQKLHARGPMGLRAITTTKSLVYGTGQIRS.

Belongs to the gamma-glutamyl phosphate reductase family.

The protein localises to the cytoplasm. The enzyme catalyses L-glutamate 5-semialdehyde + phosphate + NADP(+) = L-glutamyl 5-phosphate + NADPH + H(+). The protein operates within amino-acid biosynthesis; L-proline biosynthesis; L-glutamate 5-semialdehyde from L-glutamate: step 2/2. In terms of biological role, catalyzes the NADPH-dependent reduction of L-glutamate 5-phosphate into L-glutamate 5-semialdehyde and phosphate. The product spontaneously undergoes cyclization to form 1-pyrroline-5-carboxylate. In Geobacillus sp. (strain WCH70), this protein is Gamma-glutamyl phosphate reductase.